The chain runs to 100 residues: Small ribosomal subunit protein uS14c (100 aa).

Belongs to the universal ribosomal protein uS14 family. Part of the 30S ribosomal subunit.

The protein resides in the plastid. It localises to the chloroplast. Its function is as follows. Binds 16S rRNA, required for the assembly of 30S particles. The polypeptide is Small ribosomal subunit protein uS14c (Buxus microphylla (Littleleaf boxwood)).